We begin with the raw amino-acid sequence, 95 residues long: Integration host factor subunit beta (95 aa).

The segment at 56-76 is disordered; sequence RAPRTGRNPKTGSSVDLEGKY.

The protein belongs to the bacterial histone-like protein family. In terms of assembly, heterodimer of an alpha and a beta chain.

This protein is one of the two subunits of integration host factor, a specific DNA-binding protein that functions in genetic recombination as well as in transcriptional and translational control. The protein is Integration host factor subunit beta of Shewanella baltica (strain OS223).